A 235-amino-acid chain; its full sequence is Segregation and condensation protein A (235 aa).

This sequence belongs to the ScpA family. Component of a cohesin-like complex composed of ScpA, ScpB and the Smc homodimer, in which ScpA and ScpB bind to the head domain of Smc. The presence of the three proteins is required for the association of the complex with DNA.

It is found in the cytoplasm. Participates in chromosomal partition during cell division. May act via the formation of a condensin-like complex containing Smc and ScpB that pull DNA away from mid-cell into both cell halves. This chain is Segregation and condensation protein A, found in Streptococcus equi subsp. equi (strain 4047).